The primary structure comprises 926 residues: OTU domain-containing protein 7A (926 aa).

A Phosphoserine modification is found at serine 121. The segment at 170-413 (ERDLIEQATM…AVDPGKDWEW (244 aa)) is TRAF-binding. The segment at 185–452 (AGRLNWWSTV…VTWIRIPSET (268 aa)) is catalytic. Residues 201-377 (LLPLATTGDG…QAHFSALVSM (177 aa)) enclose the OTU domain. Aspartate 209 is an active-site residue. Catalysis depends on cysteine 212, which acts as the Nucleophile. Catalysis depends on histidine 370, which acts as the Proton acceptor. 3 disordered regions span residues 455–517 (PLAQ…DSVA), 540–615 (GLVH…GDAW), and 671–779 (EQEQ…ARQS). Low complexity predominate over residues 484–494 (VCSNSNSNNGK). The segment covering 495-513 (NGKDKEKEKQRKDKDKTRA) has biased composition (basic and acidic residues). The Nuclear localization signal motif lies at 497-512 (KDKEKEKQRKDKDKTR). Composition is skewed to low complexity over residues 579 to 595 (GASA…PSPT), 680 to 691 (AAAAAAATATAT), and 731 to 750 (SPGT…AASP). A compositionally biased stretch (gly residues) spans 751-767 (GPGGGARRAAPGTGGPT). Arginine 880 bears the Omega-N-methylarginine mark. An A20-type zinc finger spans residues 884-919 (GPAQRRCQRENCAFYGRAETEHFCSYCYREELRRRR). Cysteine 890, cysteine 895, cysteine 907, and cysteine 910 together coordinate Zn(2+).

Belongs to the peptidase C64 family.

It is found in the cytoplasm. The protein localises to the nucleus. The catalysed reaction is Thiol-dependent hydrolysis of ester, thioester, amide, peptide and isopeptide bonds formed by the C-terminal Gly of ubiquitin (a 76-residue protein attached to proteins as an intracellular targeting signal).. In terms of biological role, deubiquitinase, which cleaves 'Lys-11'-linked polyubiquitin chains. The protein is OTU domain-containing protein 7A (Otud7a) of Mus musculus (Mouse).